We begin with the raw amino-acid sequence, 127 residues long: uncharacterized protein (127 aa).

This is an uncharacterized protein from Bacillus subtilis (strain 168).